A 1384-amino-acid chain; its full sequence is Enhancer of mRNA-decapping protein 4 (1384 aa).

4 WD repeats span residues 171–211, 227–274, 292–331, and 340–390; these read GFTG…SKIQ, NSNR…SNNS, GHAA…QDQP, and HNGQ…CLQT. Disordered regions lie at residues 471 to 494, 551 to 584, and 796 to 931; these read TEVL…TSES, AMSS…SPAP, and AGAA…MSTE. Residues 482 to 494 show a composition bias toward polar residues; that stretch reads SMTAEGNQGTSES. Over residues 834–844 the composition is skewed to basic and acidic residues; sequence CSREEIKDRHI. Composition is skewed to polar residues over residues 854–866 and 918–931; these read HLTQ…ASAE and SSQS…MSTE. Residues 930 to 1012 are a coiled coil; the sequence is TEVQDELLQM…QQLQDQLVQQ (83 aa).

Belongs to the WD repeat EDC4 family.

The protein resides in the cytoplasm. The protein localises to the P-body. It localises to the nucleus. Its function is as follows. In the process of mRNA degradation, seems to play a role in mRNA decapping. The sequence is that of Enhancer of mRNA-decapping protein 4 (edc4) from Danio rerio (Zebrafish).